Reading from the N-terminus, the 607-residue chain is (R)-limonene synthase 1, chloroplastic (607 aa).

The N-terminal 52 residues, Met1–Asp52, are a transit peptide targeting the chloroplast. Residues Asp343 and Asp347 each coordinate Mn(2+). Substrate-binding residues include Asp343, Asp347, Arg485, Asp488, and Lys504. The short motif at Asp343 to Asp347 is the DDXXD motif element. Asp488 serves as a coordination point for Mn(2+).

It belongs to the terpene synthase family. Mg(2+) serves as cofactor. The cofactor is Mn(2+).

It is found in the plastid. The protein localises to the chloroplast. It catalyses the reaction (2E)-geranyl diphosphate = (4R)-limonene + diphosphate. Its activity is regulated as follows. Inhibited by 2-fluorogeranyl diphosphate (FGPP) and 2-fluoroneryl diphosphate (FNPP). Its function is as follows. Catalyzes the conversion of geranyl diphosphate to (+)-(4R)-limonene. Produces exclusively the (+)-enantiomer. Can use neryl diphosphate as substrate. Has no activity with farnesyl diphosphate. This is (R)-limonene synthase 1, chloroplastic from Citrus sinensis (Sweet orange).